We begin with the raw amino-acid sequence, 193 residues long: Secreted RxLR effector protein 126 (193 aa).

The first 20 residues, 1-20 (MRYLLAVLIAAAFVISSGTS), serve as a signal peptide directing secretion. The RxLR-dEER motif lies at 50 to 64 (RMLQTKAVNGLEEER).

It belongs to the RxLR effector family.

Its subcellular location is the secreted. It localises to the host membrane. Functionally, secreted effector that completely suppresses the host cell death induced by cell death-inducing proteins. The sequence is that of Secreted RxLR effector protein 126 from Plasmopara viticola (Downy mildew of grapevine).